A 115-amino-acid polypeptide reads, in one-letter code: Large ribosomal subunit protein bL21 (115 aa).

It belongs to the bacterial ribosomal protein bL21 family. Part of the 50S ribosomal subunit. Contacts protein L20.

Functionally, this protein binds to 23S rRNA in the presence of protein L20. In Coxiella burnetii (strain Dugway 5J108-111), this protein is Large ribosomal subunit protein bL21.